The following is a 483-amino-acid chain: Protein nucleotidyltransferase YdiU (483 aa).

ATP contacts are provided by Gly-87, Gly-89, Arg-90, Lys-110, Asp-122, Gly-123, Arg-173, and Arg-180. The active-site Proton acceptor is Asp-249. Asn-250 and Asp-259 together coordinate Mg(2+). Residue Asp-259 participates in ATP binding.

This sequence belongs to the SELO family. Mg(2+) is required as a cofactor. The cofactor is Mn(2+).

The catalysed reaction is L-seryl-[protein] + ATP = 3-O-(5'-adenylyl)-L-seryl-[protein] + diphosphate. It carries out the reaction L-threonyl-[protein] + ATP = 3-O-(5'-adenylyl)-L-threonyl-[protein] + diphosphate. It catalyses the reaction L-tyrosyl-[protein] + ATP = O-(5'-adenylyl)-L-tyrosyl-[protein] + diphosphate. The enzyme catalyses L-histidyl-[protein] + UTP = N(tele)-(5'-uridylyl)-L-histidyl-[protein] + diphosphate. The catalysed reaction is L-seryl-[protein] + UTP = O-(5'-uridylyl)-L-seryl-[protein] + diphosphate. It carries out the reaction L-tyrosyl-[protein] + UTP = O-(5'-uridylyl)-L-tyrosyl-[protein] + diphosphate. Functionally, nucleotidyltransferase involved in the post-translational modification of proteins. It can catalyze the addition of adenosine monophosphate (AMP) or uridine monophosphate (UMP) to a protein, resulting in modifications known as AMPylation and UMPylation. This chain is Protein nucleotidyltransferase YdiU, found in Pelagibacter ubique (strain HTCC1062).